The chain runs to 398 residues: MQKRLTLLGSTGSIGDSTLDVVARHPERFSVYALTAHRNGDKLVEQCLRFAPEVAVVGDAATAAHVEAKLRAAGSKTTVLYGPQALVDVSASDGCDTVVAAIVGAAGLAPSLAAARAGKRILLANKESLVMSGGIFMDAVRDHGAILLPVDSEHNAIFQCMPRDENEHGGISKIILTASGGPFRTREPATLADVTPDEACKHPNWVMGRKISVDSATMMNKGLEVIEAHWIFGLPGERIDVLIHPQSVIHSLVSYRDGSVLAQLGNPDMRTPIAHALAFPERVDAGVDQLDLAQIAQLSFEKPDYARFPCLALALKALEEGGIASAALNAANEVAVEAFLERRIGFMAIAATVDAVLNALPNRSPNGLDDVLAADADARRLAAGFIAKAPAPRVERIV.

7 residues coordinate NADPH: Thr-11, Gly-12, Ser-13, Ile-14, Arg-38, Asn-39, and Asn-125. Lys-126 provides a ligand contact to 1-deoxy-D-xylulose 5-phosphate. An NADPH-binding site is contributed by Glu-127. Residue Asp-151 participates in Mn(2+) binding. Positions 152, 153, 179, and 202 each coordinate 1-deoxy-D-xylulose 5-phosphate. Glu-153 provides a ligand contact to Mn(2+). An NADPH-binding site is contributed by Gly-208. 4 residues coordinate 1-deoxy-D-xylulose 5-phosphate: Ser-215, Asn-220, Lys-221, and Glu-224. Glu-224 is a Mn(2+) binding site.

The protein belongs to the DXR family. Mg(2+) serves as cofactor. Mn(2+) is required as a cofactor.

It catalyses the reaction 2-C-methyl-D-erythritol 4-phosphate + NADP(+) = 1-deoxy-D-xylulose 5-phosphate + NADPH + H(+). It functions in the pathway isoprenoid biosynthesis; isopentenyl diphosphate biosynthesis via DXP pathway; isopentenyl diphosphate from 1-deoxy-D-xylulose 5-phosphate: step 1/6. Functionally, catalyzes the NADPH-dependent rearrangement and reduction of 1-deoxy-D-xylulose-5-phosphate (DXP) to 2-C-methyl-D-erythritol 4-phosphate (MEP). The protein is 1-deoxy-D-xylulose 5-phosphate reductoisomerase of Burkholderia vietnamiensis (strain G4 / LMG 22486) (Burkholderia cepacia (strain R1808)).